The chain runs to 329 residues: DNA-directed RNA polymerase subunit alpha (329 aa).

The alpha N-terminal domain (alpha-NTD) stretch occupies residues 1–231 (MQNSLLKPKA…EQLAVFAQLE (231 aa)). The alpha C-terminal domain (alpha-CTD) stretch occupies residues 249 to 329 (FDPILLRPVD…SWPPAALEKR (81 aa)).

This sequence belongs to the RNA polymerase alpha chain family. In terms of assembly, homodimer. The RNAP catalytic core consists of 2 alpha, 1 beta, 1 beta' and 1 omega subunit. When a sigma factor is associated with the core the holoenzyme is formed, which can initiate transcription.

The enzyme catalyses RNA(n) + a ribonucleoside 5'-triphosphate = RNA(n+1) + diphosphate. Its function is as follows. DNA-dependent RNA polymerase catalyzes the transcription of DNA into RNA using the four ribonucleoside triphosphates as substrates. This Albidiferax ferrireducens (strain ATCC BAA-621 / DSM 15236 / T118) (Rhodoferax ferrireducens) protein is DNA-directed RNA polymerase subunit alpha.